Reading from the N-terminus, the 410-residue chain is Cell division protein FtsZ (410 aa).

GTP contacts are provided by residues 22-26, 109-111, glutamate 140, arginine 144, and aspartate 188; these read GGGGN and GTG. Residues 318–410 are disordered; sequence ESKKDRKPHR…STPPFFRRKR (93 aa). A compositionally biased stretch (polar residues) spans 330 to 344; that stretch reads RQAVQPMQQTTQSVE. The segment covering 360–398 has biased composition (basic and acidic residues); it reads WDIRREQNTRPKVDESSLEQVDKKEFDTFHREEPNHNDD.

It belongs to the FtsZ family. As to quaternary structure, homodimer. Polymerizes to form a dynamic ring structure in a strictly GTP-dependent manner. Interacts directly with several other division proteins.

It is found in the cytoplasm. Its function is as follows. Essential cell division protein that forms a contractile ring structure (Z ring) at the future cell division site. The regulation of the ring assembly controls the timing and the location of cell division. One of the functions of the FtsZ ring is to recruit other cell division proteins to the septum to produce a new cell wall between the dividing cells. Binds GTP and shows GTPase activity. The chain is Cell division protein FtsZ from Enterococcus faecalis (strain ATCC 700802 / V583).